We begin with the raw amino-acid sequence, 215 residues long: N-(5'-phosphoribosyl)anthranilate isomerase (215 aa).

Belongs to the TrpF family.

The enzyme catalyses N-(5-phospho-beta-D-ribosyl)anthranilate = 1-(2-carboxyphenylamino)-1-deoxy-D-ribulose 5-phosphate. The protein operates within amino-acid biosynthesis; L-tryptophan biosynthesis; L-tryptophan from chorismate: step 3/5. This chain is N-(5'-phosphoribosyl)anthranilate isomerase, found in Cellvibrio japonicus (strain Ueda107) (Pseudomonas fluorescens subsp. cellulosa).